The primary structure comprises 678 residues: uncharacterized protein (678 aa).

Disordered stretches follow at residues 123–156 (TPLSEDRKPTSNNEEEDDADEAKSSNADSSTDSV) and 381–417 (TETTETEGVDKEDSDKASSVQGNEDEVPDTASETEHS).

It is found in the cytoplasm. This is an uncharacterized protein from Schizosaccharomyces pombe (strain 972 / ATCC 24843) (Fission yeast).